The following is an 87-amino-acid chain: Large ribosomal subunit protein bL31B (87 aa).

Belongs to the bacterial ribosomal protein bL31 family. Type B subfamily. In terms of assembly, part of the 50S ribosomal subunit.

This Burkholderia thailandensis (strain ATCC 700388 / DSM 13276 / CCUG 48851 / CIP 106301 / E264) protein is Large ribosomal subunit protein bL31B.